The chain runs to 423 residues: MEDKRSLSMARCEERNSRGQDHGLERVPFPPQLQSETYLHPADPSPAWDDPGSTGSPNLRLLTEEIAFQPLAEEASFRRPHPDGDVPPQGEDNLLSLPFPQKLWRLVSSNQFSSIWWDDSGACRVINQKLFEKEILKRDVAHKVFATTSIKSFFRQLNLYGFRKRRQCTFRTFTRIFSAKRLVSILNKLEFYCHPYFQRDSPHLLVRMKRRVGVKSAPRHQEEDKPEAAGSCLAPADTEQQDHTSPNENDQVTPQHREPAGPNTQIRSGSAPPATPVMVPDSAVASDNSPVTQPAGEWSEGSQAHVTPVAAVPGPAALPFLYVPGSPTQMNSYGPVVALPTASRSTLAMDTTGLPAPGMLPFCHLWVPVTLVAAGAAQPAASMVMFPHLPALHHHCPHSHRTSQYMPASDGPQAYPDYADQST.

A compositionally biased stretch (basic and acidic residues) spans Met1 to Glu25. Disordered stretches follow at residues Met1–Ser56, Lys215–Gln303, and Pro397–Thr423. The DNA-binding element occupies Pro98–Ser282. Lys215 is covalently cross-linked (Glycyl lysine isopeptide (Lys-Gly) (interchain with G-Cter in SUMO1)). Polar residues predominate over residues His243 to Pro254.

Belongs to the HSF family. In terms of tissue distribution, testis-specific.

It localises to the nucleus. The protein localises to the cytoplasm. In Homo sapiens (Human), this protein is Heat shock transcription factor, X-linked (HSFX1).